A 488-amino-acid polypeptide reads, in one-letter code: Dipeptidase 3 (488 aa).

An N-terminal signal peptide occupies residues 1–35; it reads MQPTGPEGPRALSLRPLGHRLSLLGVLLIIPSLWV. Low complexity predominate over residues 41–60; it reads TPSLSSAPTSPGASSAMTTP. The tract at residues 41 to 74 is disordered; the sequence is TPSLSSAPTSPGASSAMTTPGIPNDTTTSGVTSD. 2 cysteine pairs are disulfide-bonded: Cys-143/Cys-222 and Cys-294/Cys-326. N-linked (GlcNAc...) asparagine glycosylation is present at Asn-331. Residue Ser-459 is the site of GPI-anchor amidated serine attachment. Residues 460-487 constitute a propeptide, removed in mature form; sequence KAPPCPLLGLVAAVTSPAFTLWLCCSGH.

It belongs to the metallo-dependent hydrolases superfamily. Peptidase M19 family. Homodimer; disulfide-linked. Interacts with TEX101; co-localized on the cell surface of spermatocytes, spermatids, and testicular spermatozoa, co-localized only in cytoplasmic droplets of caput and corpus epididymal sperm.

The protein resides in the membrane. Lacks dipeptidase activity and is unable to hydrolyze cystinyl-bis-glycine, leukotriene D4 and the beta-lactam antibiotic imipenem. The absence of activity may be due to the inability of serine (instead of aspartate found in DPEP1/2) at position 356 to function as the acid/base catalyst and activate the nucleophilic water/hydroxide. This Rattus norvegicus (Rat) protein is Dipeptidase 3 (Dpep3).